We begin with the raw amino-acid sequence, 126 residues long: Glycine cleavage system H protein (126 aa).

One can recognise a Lipoyl-binding domain in the interval valine 22–lysine 104. Lysine 63 is modified (N6-lipoyllysine).

The protein belongs to the GcvH family. The glycine cleavage system is composed of four proteins: P, T, L and H. (R)-lipoate is required as a cofactor.

In terms of biological role, the glycine cleavage system catalyzes the degradation of glycine. The H protein shuttles the methylamine group of glycine from the P protein to the T protein. The chain is Glycine cleavage system H protein from Bacteroides fragilis (strain ATCC 25285 / DSM 2151 / CCUG 4856 / JCM 11019 / LMG 10263 / NCTC 9343 / Onslow / VPI 2553 / EN-2).